The following is a 1044-amino-acid chain: Isoleucine--tRNA ligase (1044 aa).

Positions 48–58 (PFATGLPHFGH) match the 'HIGH' region motif. Residues 594 to 598 (KMSKS) carry the 'KMSKS' region motif. ATP is bound at residue Lys597.

The protein belongs to the class-I aminoacyl-tRNA synthetase family. IleS type 2 subfamily. In terms of assembly, monomer. Zn(2+) is required as a cofactor.

It localises to the cytoplasm. It catalyses the reaction tRNA(Ile) + L-isoleucine + ATP = L-isoleucyl-tRNA(Ile) + AMP + diphosphate. Its function is as follows. Catalyzes the attachment of isoleucine to tRNA(Ile). As IleRS can inadvertently accommodate and process structurally similar amino acids such as valine, to avoid such errors it has two additional distinct tRNA(Ile)-dependent editing activities. One activity is designated as 'pretransfer' editing and involves the hydrolysis of activated Val-AMP. The other activity is designated 'posttransfer' editing and involves deacylation of mischarged Val-tRNA(Ile). In Borrelia duttonii (strain Ly), this protein is Isoleucine--tRNA ligase.